A 198-amino-acid polypeptide reads, in one-letter code: IMP cyclohydrolase (198 aa).

It belongs to the archaeal IMP cyclohydrolase family.

It catalyses the reaction IMP + H2O = 5-formamido-1-(5-phospho-D-ribosyl)imidazole-4-carboxamide. Its pathway is purine metabolism; IMP biosynthesis via de novo pathway; IMP from 5-formamido-1-(5-phospho-D-ribosyl)imidazole-4-carboxamide: step 1/1. Functionally, catalyzes the cyclization of 5-formylamidoimidazole-4-carboxamide ribonucleotide to IMP. The sequence is that of IMP cyclohydrolase from Methanopyrus kandleri (strain AV19 / DSM 6324 / JCM 9639 / NBRC 100938).